The primary structure comprises 101 residues: MAKKSMIQRELKREKLVAKYAQKRAELKAIILDINSTEEQIWEAQIKLQKLPVNSSASRVQRRCKVTGRPHAVYRKFGLCRNKLREYAMAGDVPGLKKASW.

This sequence belongs to the universal ribosomal protein uS14 family. Part of the 30S ribosomal subunit. Contacts proteins S3 and S10.

In terms of biological role, binds 16S rRNA, required for the assembly of 30S particles and may also be responsible for determining the conformation of the 16S rRNA at the A site. In Francisella tularensis subsp. novicida (strain U112), this protein is Small ribosomal subunit protein uS14.